The primary structure comprises 181 residues: Adenine phosphoribosyltransferase (181 aa).

It belongs to the purine/pyrimidine phosphoribosyltransferase family. As to quaternary structure, homodimer.

The protein resides in the cytoplasm. The enzyme catalyses AMP + diphosphate = 5-phospho-alpha-D-ribose 1-diphosphate + adenine. Its pathway is purine metabolism; AMP biosynthesis via salvage pathway; AMP from adenine: step 1/1. Its function is as follows. Catalyzes a salvage reaction resulting in the formation of AMP, that is energically less costly than de novo synthesis. The chain is Adenine phosphoribosyltransferase from Brucella abortus (strain S19).